The following is an 877-amino-acid chain: Alanine--tRNA ligase (877 aa).

The Zn(2+) site is built by H567, H571, C669, and H673.

This sequence belongs to the class-II aminoacyl-tRNA synthetase family. Zn(2+) is required as a cofactor.

It is found in the cytoplasm. It carries out the reaction tRNA(Ala) + L-alanine + ATP = L-alanyl-tRNA(Ala) + AMP + diphosphate. Its function is as follows. Catalyzes the attachment of alanine to tRNA(Ala) in a two-step reaction: alanine is first activated by ATP to form Ala-AMP and then transferred to the acceptor end of tRNA(Ala). Also edits incorrectly charged Ser-tRNA(Ala) and Gly-tRNA(Ala) via its editing domain. The protein is Alanine--tRNA ligase of Rickettsia bellii (strain RML369-C).